The primary structure comprises 79 residues: Conotoxin Tr6.3 (79 aa).

A signal peptide spans 1–22; sequence MKLTCVLIISVLFLTASQLITA. Positions 23–47 are excised as a propeptide; that stretch reads VYSRDKQQYRAARLRDEMRNLKGAR. Cystine bridges form between C49-C62, C56-C67, and C61-C77. A 4-hydroxyproline mark is found at P60 and P63.

It belongs to the conotoxin O1 superfamily. Expressed by the venom duct.

The protein resides in the secreted. Its function is as follows. Ion channel inhibitor that inhibits the increase in intracellular calcium upon depolarization in DRG neurons. In vivo, both intraperitoneal and intracranial injections into mice induce hyperactivity. This is Conotoxin Tr6.3 from Conus terebra (Sea snail).